The sequence spans 373 residues: Chaperone protein DnaJ (373 aa).

Residues 4–68 (NYYQILGVSK…QTRAAYDRLG (65 aa)) enclose the J domain. The CR-type zinc finger occupies 136 to 214 (GIEKNISFSS…CHGMGRYHKQ (79 aa)). Positions 149, 152, 166, 169, 188, 191, 202, and 205 each coordinate Zn(2+). CXXCXGXG motif repeat units follow at residues 149–156 (CDTCHGSG), 166–173 (CDACSGVG), 188–195 (CHKCQGNG), and 202–209 (CKKCHGMG).

This sequence belongs to the DnaJ family. As to quaternary structure, homodimer. Requires Zn(2+) as cofactor.

It is found in the cytoplasm. Functionally, participates actively in the response to hyperosmotic and heat shock by preventing the aggregation of stress-denatured proteins and by disaggregating proteins, also in an autonomous, DnaK-independent fashion. Unfolded proteins bind initially to DnaJ; upon interaction with the DnaJ-bound protein, DnaK hydrolyzes its bound ATP, resulting in the formation of a stable complex. GrpE releases ADP from DnaK; ATP binding to DnaK triggers the release of the substrate protein, thus completing the reaction cycle. Several rounds of ATP-dependent interactions between DnaJ, DnaK and GrpE are required for fully efficient folding. Also involved, together with DnaK and GrpE, in the DNA replication of plasmids through activation of initiation proteins. The sequence is that of Chaperone protein DnaJ from Rickettsia peacockii (strain Rustic).